We begin with the raw amino-acid sequence, 83 residues long: Small ribosomal subunit protein bS18 (83 aa).

Belongs to the bacterial ribosomal protein bS18 family. In terms of assembly, part of the 30S ribosomal subunit. Forms a tight heterodimer with protein bS6.

Binds as a heterodimer with protein bS6 to the central domain of the 16S rRNA, where it helps stabilize the platform of the 30S subunit. In Desulfosudis oleivorans (strain DSM 6200 / JCM 39069 / Hxd3) (Desulfococcus oleovorans), this protein is Small ribosomal subunit protein bS18.